The primary structure comprises 155 residues: MTGTAISVCLLFLLSVCSACYISNCPIGGKRSIMDAPQRKCMSCGPGDRGRCFGPGICCGESFGCLMGSPESARCAEENYLLTPCQAGGRPCGSEGGLCASSGLCCDAESCTMDQSCLSEEEGDERGSLFDGSDSGDVILKLLRLAGLTSPHQTH.

Residues 1-19 form the signal peptide; the sequence is MTGTAISVCLLFLLSVCSA. A disulfide bridge links Cys-20 with Cys-25. Gly-28 carries the post-translational modification Glycine amide. Disulfide bonds link Cys-41/Cys-85, Cys-44/Cys-58, Cys-52/Cys-75, Cys-59/Cys-65, Cys-92/Cys-105, Cys-99/Cys-117, and Cys-106/Cys-111.

This sequence belongs to the vasopressin/oxytocin family. Seven disulfide bonds are present in neurophysin.

Isotocin causes contraction of smooth muscles. This Takifugu rubripes (Japanese pufferfish) protein is Isotocin-neurophysin IT 1.